The primary structure comprises 452 residues: Chaperone SurA (452 aa).

An N-terminal signal peptide occupies residues 1–28 (MKKTLRFAAVVSSLAASAALLVAAPAAA). PpiC domains follow at residues 186-288 (QQDL…RLVD) and 302-400 (IVQT…QVLN).

Its subcellular location is the periplasm. It carries out the reaction [protein]-peptidylproline (omega=180) = [protein]-peptidylproline (omega=0). Chaperone involved in the correct folding and assembly of outer membrane proteins. Recognizes specific patterns of aromatic residues and the orientation of their side chains, which are found more frequently in integral outer membrane proteins. May act in both early periplasmic and late outer membrane-associated steps of protein maturation. The sequence is that of Chaperone SurA from Burkholderia orbicola (strain AU 1054).